Reading from the N-terminus, the 281-residue chain is 2-dehydro-3-deoxyphosphooctonate aldolase (281 aa).

The protein belongs to the KdsA family.

The protein resides in the cytoplasm. The enzyme catalyses D-arabinose 5-phosphate + phosphoenolpyruvate + H2O = 3-deoxy-alpha-D-manno-2-octulosonate-8-phosphate + phosphate. The protein operates within carbohydrate biosynthesis; 3-deoxy-D-manno-octulosonate biosynthesis; 3-deoxy-D-manno-octulosonate from D-ribulose 5-phosphate: step 2/3. Its pathway is bacterial outer membrane biogenesis; lipopolysaccharide biosynthesis. This is 2-dehydro-3-deoxyphosphooctonate aldolase from Janthinobacterium sp. (strain Marseille) (Minibacterium massiliensis).